Reading from the N-terminus, the 723-residue chain is Transcription factor E2F7 (723 aa).

The interval 121 to 146 is disordered; sequence AEEEEEEELDDSCQYEALDESERRPS. The span at 122–139 shows a compositional bias: acidic residues; that stretch reads EEEEEEELDDSCQYEALD. DNA-binding regions lie at residues 147-216 and 264-349; these read RKQK…VWHG and RKDK…KWIG. Polar residues-rich tracts occupy residues 356 to 370 and 395 to 405; these read SSNS…SNSG and LISSAPSTPHR. Disordered regions lie at residues 356 to 379, 395 to 417, 489 to 546, 650 to 689, and 702 to 723; these read SSNS…KMAR, LISS…YSRK, SLRK…ASFG, EHHG…SKSF, and QSAA…TAAN. Residues 494-503 show a composition bias toward basic and acidic residues; that stretch reads ERSEEDDHQT. Positions 520–535 are enriched in low complexity; sequence SESLSSSTRRSPVCSP.

Belongs to the E2F/DP family. As to quaternary structure, homodimer and heterodimer: mainly forms homodimers and, to a lesser extent, heterodimers with e2f8.

It is found in the nucleus. Atypical E2F transcription factor that participates in various processes such as angiogenesis and polyploidization of specialized cells. Mainly acts as a transcription repressor that binds DNA independently of DP proteins and specifically recognizes the E2 recognition site 5'-TTTC[CG]CGC-3'. Directly represses transcription of classical E2F transcription factors such as e2f1. Acts as a regulator of S-phase by recognizing and binding the E2-related site 5'-TTCCCGCC-3' and mediating repression of G1/S-regulated genes. Acts as a promoter of sprouting angiogenesis, possibly by acting as a transcription activator and promoting expression of vegfa. This Danio rerio (Zebrafish) protein is Transcription factor E2F7 (e2f7).